Consider the following 670-residue polypeptide: Lebercilin-like protein (670 aa).

The tract at residues 30–51 (KRSPGTGDFSRNSNASNKSVDY) is disordered. The span at 38 to 51 (FSRNSNASNKSVDY) shows a compositional bias: polar residues. Coiled-coil stretches lie at residues 148-259 (LHKI…EREE) and 305-336 (AAQT…IKNI). Positions 374–393 (HQGTQKSDVPPLTTKGKKAT) are disordered. A coiled-coil region spans residues 420 to 440 (EDSKRKYEDLSGEEKHLEVQI). 3 disordered regions span residues 495-516 (RSMQ…YTKG), 557-580 (KHLS…SFGK), and 609-670 (LKTD…KIII). Basic and acidic residues-rich tracts occupy residues 560–572 (SNRE…HSDS) and 621–632 (GSEEPLQSKESH). Positions 651 to 662 (TVVNSIKPSSPT) are enriched in polar residues.

It belongs to the LCA5 family.

The sequence is that of Lebercilin-like protein (LCA5L) from Homo sapiens (Human).